Reading from the N-terminus, the 276-residue chain is Sulfur carrier protein FdhD (276 aa).

The active-site Cysteine persulfide intermediate is cysteine 120.

It belongs to the FdhD family.

It is found in the cytoplasm. Required for formate dehydrogenase (FDH) activity. Acts as a sulfur carrier protein that transfers sulfur from IscS to the molybdenum cofactor prior to its insertion into FDH. The chain is Sulfur carrier protein FdhD from Bordetella parapertussis (strain 12822 / ATCC BAA-587 / NCTC 13253).